A 294-amino-acid chain; its full sequence is Ribosomal protein L11 methyltransferase (294 aa).

Residues Thr145, Gly167, Asp189, and Asn230 each contribute to the S-adenosyl-L-methionine site.

The protein belongs to the methyltransferase superfamily. PrmA family.

Its subcellular location is the cytoplasm. The enzyme catalyses L-lysyl-[protein] + 3 S-adenosyl-L-methionine = N(6),N(6),N(6)-trimethyl-L-lysyl-[protein] + 3 S-adenosyl-L-homocysteine + 3 H(+). Methylates ribosomal protein L11. The sequence is that of Ribosomal protein L11 methyltransferase from Alkalilimnicola ehrlichii (strain ATCC BAA-1101 / DSM 17681 / MLHE-1).